We begin with the raw amino-acid sequence, 565 residues long: DNA primase (565 aa).

The CHC2-type zinc-finger motif lies at 37 to 61 (CPFHSETNPSFYVHPGLKIYHCFGC). Residues 248–329 (GFFVITEGYF…NVLVATPSPY (82 aa)) enclose the Toprim domain. Residues Glu254, Asp298, and Asp300 each contribute to the Mg(2+) site.

It belongs to the DnaG primase family. In terms of assembly, monomer. Interacts with DnaB. Requires Zn(2+) as cofactor. Mg(2+) is required as a cofactor.

The catalysed reaction is ssDNA + n NTP = ssDNA/pppN(pN)n-1 hybrid + (n-1) diphosphate.. In terms of biological role, RNA polymerase that catalyzes the synthesis of short RNA molecules used as primers for DNA polymerase during DNA replication. The sequence is that of DNA primase from Thermotoga maritima (strain ATCC 43589 / DSM 3109 / JCM 10099 / NBRC 100826 / MSB8).